Reading from the N-terminus, the 1409-residue chain is DNA-directed RNA polymerase subunit beta' (1409 aa).

Zn(2+)-binding residues include Cys70, Cys72, Cys85, and Cys88. Asp460, Asp462, and Asp464 together coordinate Mg(2+). Positions 822, 896, 903, and 906 each coordinate Zn(2+).

The protein belongs to the RNA polymerase beta' chain family. In terms of assembly, the RNAP catalytic core consists of 2 alpha, 1 beta, 1 beta' and 1 omega subunit. When a sigma factor is associated with the core the holoenzyme is formed, which can initiate transcription. The cofactor is Mg(2+). Zn(2+) is required as a cofactor.

The enzyme catalyses RNA(n) + a ribonucleoside 5'-triphosphate = RNA(n+1) + diphosphate. Its function is as follows. DNA-dependent RNA polymerase catalyzes the transcription of DNA into RNA using the four ribonucleoside triphosphates as substrates. This is DNA-directed RNA polymerase subunit beta' from Methylobacillus flagellatus (strain ATCC 51484 / DSM 6875 / VKM B-1610 / KT).